Reading from the N-terminus, the 227-residue chain is Cytochrome c oxidase subunit 2 (227 aa).

At 1-14 the chain is on the mitochondrial intermembrane side; the sequence is MAYPMQLGLQDATS. Residues 15–45 traverse the membrane as a helical segment; sequence PIMEELLHFHDHTLMIVFLISSLVLYIISLM. Over 46–59 the chain is Mitochondrial matrix; the sequence is LTTKLTHTSTMDAQ. Residues 60 to 87 traverse the membrane as a helical segment; sequence EVETIWTILPAIILIMIALPSLRILYMM. The Mitochondrial intermembrane portion of the chain corresponds to 88-227; that stretch reads DEINNPSLTV…HFEKWSASML (140 aa). Cu cation-binding residues include His-161, Cys-196, Glu-198, Cys-200, His-204, and Met-207. Mg(2+) is bound at residue Glu-198.

This sequence belongs to the cytochrome c oxidase subunit 2 family. Component of the cytochrome c oxidase (complex IV, CIV), a multisubunit enzyme composed of 14 subunits. The complex is composed of a catalytic core of 3 subunits MT-CO1, MT-CO2 and MT-CO3, encoded in the mitochondrial DNA, and 11 supernumerary subunits COX4I, COX5A, COX5B, COX6A, COX6B, COX6C, COX7A, COX7B, COX7C, COX8 and NDUFA4, which are encoded in the nuclear genome. The complex exists as a monomer or a dimer and forms supercomplexes (SCs) in the inner mitochondrial membrane with NADH-ubiquinone oxidoreductase (complex I, CI) and ubiquinol-cytochrome c oxidoreductase (cytochrome b-c1 complex, complex III, CIII), resulting in different assemblies (supercomplex SCI(1)III(2)IV(1) and megacomplex MCI(2)III(2)IV(2)). Found in a complex with TMEM177, COA6, COX18, COX20, SCO1 and SCO2. Interacts with TMEM177 in a COX20-dependent manner. Interacts with COX20. Interacts with COX16. Cu cation serves as cofactor.

Its subcellular location is the mitochondrion inner membrane. It catalyses the reaction 4 Fe(II)-[cytochrome c] + O2 + 8 H(+)(in) = 4 Fe(III)-[cytochrome c] + 2 H2O + 4 H(+)(out). Its function is as follows. Component of the cytochrome c oxidase, the last enzyme in the mitochondrial electron transport chain which drives oxidative phosphorylation. The respiratory chain contains 3 multisubunit complexes succinate dehydrogenase (complex II, CII), ubiquinol-cytochrome c oxidoreductase (cytochrome b-c1 complex, complex III, CIII) and cytochrome c oxidase (complex IV, CIV), that cooperate to transfer electrons derived from NADH and succinate to molecular oxygen, creating an electrochemical gradient over the inner membrane that drives transmembrane transport and the ATP synthase. Cytochrome c oxidase is the component of the respiratory chain that catalyzes the reduction of oxygen to water. Electrons originating from reduced cytochrome c in the intermembrane space (IMS) are transferred via the dinuclear copper A center (CU(A)) of subunit 2 and heme A of subunit 1 to the active site in subunit 1, a binuclear center (BNC) formed by heme A3 and copper B (CU(B)). The BNC reduces molecular oxygen to 2 water molecules using 4 electrons from cytochrome c in the IMS and 4 protons from the mitochondrial matrix. The chain is Cytochrome c oxidase subunit 2 (MT-CO2) from Damaliscus pygargus phillipsi (Blesbok).